The chain runs to 199 residues: Ribonuclease P protein component 3 (199 aa).

This sequence belongs to the eukaryotic/archaeal RNase P protein component 3 family. As to quaternary structure, consists of a catalytic RNA component and at least 4-5 protein subunits.

The protein resides in the cytoplasm. The enzyme catalyses Endonucleolytic cleavage of RNA, removing 5'-extranucleotides from tRNA precursor.. Functionally, part of ribonuclease P, a protein complex that generates mature tRNA molecules by cleaving their 5'-ends. The chain is Ribonuclease P protein component 3 from Archaeoglobus fulgidus (strain ATCC 49558 / DSM 4304 / JCM 9628 / NBRC 100126 / VC-16).